We begin with the raw amino-acid sequence, 203 residues long: ATP-dependent Clp protease proteolytic subunit (203 aa).

Catalysis depends on serine 107, which acts as the Nucleophile. Residue histidine 132 is part of the active site.

It belongs to the peptidase S14 family. As to quaternary structure, fourteen ClpP subunits assemble into 2 heptameric rings which stack back to back to give a disk-like structure with a central cavity, resembling the structure of eukaryotic proteasomes.

It localises to the cytoplasm. The catalysed reaction is Hydrolysis of proteins to small peptides in the presence of ATP and magnesium. alpha-casein is the usual test substrate. In the absence of ATP, only oligopeptides shorter than five residues are hydrolyzed (such as succinyl-Leu-Tyr-|-NHMec, and Leu-Tyr-Leu-|-Tyr-Trp, in which cleavage of the -Tyr-|-Leu- and -Tyr-|-Trp bonds also occurs).. Cleaves peptides in various proteins in a process that requires ATP hydrolysis. Has a chymotrypsin-like activity. Plays a major role in the degradation of misfolded proteins. The polypeptide is ATP-dependent Clp protease proteolytic subunit (Pelagibacter ubique (strain HTCC1062)).